Consider the following 641-residue polypeptide: 1-deoxy-D-xylulose-5-phosphate synthase (641 aa).

Thiamine diphosphate is bound by residues H71 and 112–114; that span reads SHA. D144 contacts Mg(2+). Residues 145 to 146, N173, Y284, and E365 contribute to the thiamine diphosphate site; that span reads GA. Residue N173 participates in Mg(2+) binding.

The protein belongs to the transketolase family. DXPS subfamily. In terms of assembly, homodimer. The cofactor is Mg(2+). Thiamine diphosphate is required as a cofactor.

The enzyme catalyses D-glyceraldehyde 3-phosphate + pyruvate + H(+) = 1-deoxy-D-xylulose 5-phosphate + CO2. It participates in metabolic intermediate biosynthesis; 1-deoxy-D-xylulose 5-phosphate biosynthesis; 1-deoxy-D-xylulose 5-phosphate from D-glyceraldehyde 3-phosphate and pyruvate: step 1/1. Catalyzes the acyloin condensation reaction between C atoms 2 and 3 of pyruvate and glyceraldehyde 3-phosphate to yield 1-deoxy-D-xylulose-5-phosphate (DXP). This chain is 1-deoxy-D-xylulose-5-phosphate synthase, found in Mycolicibacterium paratuberculosis (strain ATCC BAA-968 / K-10) (Mycobacterium paratuberculosis).